Reading from the N-terminus, the 488-residue chain is Glutamyl-tRNA(Gln) amidotransferase subunit A (488 aa).

Active-site charge relay system residues include lysine 77 and serine 152. The active-site Acyl-ester intermediate is serine 176.

It belongs to the amidase family. GatA subfamily. In terms of assembly, heterotrimer of A, B and C subunits.

The enzyme catalyses L-glutamyl-tRNA(Gln) + L-glutamine + ATP + H2O = L-glutaminyl-tRNA(Gln) + L-glutamate + ADP + phosphate + H(+). Its function is as follows. Allows the formation of correctly charged Gln-tRNA(Gln) through the transamidation of misacylated Glu-tRNA(Gln) in organisms which lack glutaminyl-tRNA synthetase. The reaction takes place in the presence of glutamine and ATP through an activated gamma-phospho-Glu-tRNA(Gln). This is Glutamyl-tRNA(Gln) amidotransferase subunit A from Streptococcus mutans serotype c (strain ATCC 700610 / UA159).